The chain runs to 509 residues: Flotillin-like protein FloT (509 aa).

Residues 1-3 lie on the Cytoplasmic side of the membrane; the sequence is MTM. An intramembrane segment occupies 4 to 24; the sequence is PIIMIIGVVFFLLIALIAVFI. The Cytoplasmic segment spans residues 25–509; sequence TKYRTAGPDE…KEAKTIQKSE (485 aa). Residues 119-301 are PHB domain; sequence AAEQFLGKSK…KIIERQKQIE (183 aa). The segment at 203–509 is required for correct localization; the sequence is RIAQVKRDAD…KEAKTIQKSE (307 aa). 4 short sequence motifs (EA repeat) span residues 342-344, 357-360, 370-373, and 390-394; these read AEA, AEAE, and AEAEA. Residues 485–509 form a not required for correct localization region; it reads KGNVKQSINELTNEIKEAKTIQKSE.

It belongs to the band 7/mec-2 family. Flotillin subfamily. Homooligomerizes. Oligomerizes in very large complexes in vitro. Interacts with FloA, FtsH, FtsX, OppA, SdhA and SecY in detergent-resistant membrane (DRM) fractions. Interacts with FtsH at midcell. Interacts with FloA. Interacts in vivo with KinC, FloA, FtsH and ResE. Interacts with ResE, colocalizes with ResE in FloT-only membrane rafts. Another study shows nearly complete colocalization with NfeD2, but only minor colocalization with FtsH or KinC.

It is found in the cell membrane. It localises to the membrane raft. Its function is as follows. Found in functional membrane microdomains (FMM) that may be equivalent to eukaryotic membrane rafts. FMMs are highly dynamic and increase in number as cells age. FloA and FloT function is partially redundant; double deletions have marked synthetic phenotypes. Flotillins are thought to be important factors in membrane fluidity, especially during periods of rapid growth in rich media. Whether specific proteins are associated with FMMs is controversial; in one study FloT rafts have been shown to include proteins involved in adaptation to stationary phase, while FloA-FloT rafts include proteins involved in differentiation including sporulation, biofilm formation and DNA uptake competence. Another (more finely resolved) study only showed association of NfeD2 with FloT rafts of all the proteins examined. Aids homooligomerization of KinC and KinD but not KinB, may prevent incorrect hetero-association of the above kinases. Simultaneous overexpression of both FloA and FloT leads to defects in cell division and differentiation, in part caused by stabilization of FtsH and its subsequent increased ability to degrade proteins. Cells make more biofilm, are about half as long, have less EzrA and more frequent Z-rings. Involved in spatial organization of membranes, perhaps recruiting proteins (e.g. NfeD2) to specific membrane regions. Plays a role in phosphorylation of master regulator Spo0A, an early sporulation event. Plays a non-redundant role with dynamin-like protein A (dynA) in membrane dynamics and cell shape. This chain is Flotillin-like protein FloT, found in Bacillus subtilis (strain 168).